Reading from the N-terminus, the 123-residue chain is T-complex protein 1 subunit alpha (123 aa).

Gly68 contacts ADP.

This sequence belongs to the TCP-1 chaperonin family. As to quaternary structure, component of the chaperonin-containing T-complex (TRiC), a hexadecamer composed of two identical back-to-back stacked rings enclosing a protein folding chamber. Each ring is made up of eight different subunits: TCP1/CCT1, CCT2, CCT3, CCT4, CCT5, CCT6A/CCT6, CCT7, CCT8. Interacts with PACRG. Interacts with GBA1. Interacts with DLEC1.

The protein resides in the cytoplasm. The protein localises to the cytosol. It localises to the cytoskeleton. It is found in the microtubule organizing center. Its subcellular location is the centrosome. It catalyses the reaction ATP + H2O = ADP + phosphate + H(+). Component of the chaperonin-containing T-complex (TRiC), a molecular chaperone complex that assists the folding of actin, tubulin and other proteins upon ATP hydrolysis. The TRiC complex mediates the folding of WRAP53/TCAB1, thereby regulating telomere maintenance. As part of the TRiC complex may play a role in the assembly of BBSome, a complex involved in ciliogenesis regulating transports vesicles to the cilia. The protein is T-complex protein 1 subunit alpha of Mesocricetus auratus (Golden hamster).